The sequence spans 466 residues: tRNA-2-methylthio-N(6)-dimethylallyladenosine synthase (466 aa).

The region spanning 3 to 123 (KKLYIKTYGC…LPEMVARAVR (121 aa)) is the MTTase N-terminal domain. The [4Fe-4S] cluster site is built by C12, C48, C86, C162, C166, and C169. In terms of domain architecture, Radical SAM core spans 148-381 (SPAGPSAFLS…QQLLTAQQTA (234 aa)). The TRAM domain maps to 384–446 (TACVGRVQPV…ANSLSGTVVV (63 aa)).

This sequence belongs to the methylthiotransferase family. MiaB subfamily. Monomer. Requires [4Fe-4S] cluster as cofactor.

It is found in the cytoplasm. The catalysed reaction is N(6)-dimethylallyladenosine(37) in tRNA + (sulfur carrier)-SH + AH2 + 2 S-adenosyl-L-methionine = 2-methylsulfanyl-N(6)-dimethylallyladenosine(37) in tRNA + (sulfur carrier)-H + 5'-deoxyadenosine + L-methionine + A + S-adenosyl-L-homocysteine + 2 H(+). Functionally, catalyzes the methylthiolation of N6-(dimethylallyl)adenosine (i(6)A), leading to the formation of 2-methylthio-N6-(dimethylallyl)adenosine (ms(2)i(6)A) at position 37 in tRNAs that read codons beginning with uridine. The chain is tRNA-2-methylthio-N(6)-dimethylallyladenosine synthase from Rhodospirillum centenum (strain ATCC 51521 / SW).